Here is a 411-residue protein sequence, read N- to C-terminus: Secretion apparatus protein BsaZ (411 aa).

Helical transmembrane passes span I28–T48, I80–S100, A137–A157, and I175–L195. The segment at A341–A411 is disordered. Residues D370–A404 are compositionally biased toward low complexity.

The protein belongs to the type III secretion exporter family.

The protein localises to the cell membrane. In terms of biological role, part of the bsa type III secretion system, is involved in the intracellular replication of invading bacteria inside the host cell. Probably necessary for the lysis of the vacuole membrane and escape into the host cell cytoplasm. The sequence is that of Secretion apparatus protein BsaZ (bsaZ) from Burkholderia pseudomallei (strain 1106a).